Here is a 701-residue protein sequence, read N- to C-terminus: Elongation factor G (701 aa).

A tr-type G domain is found at S8–V291. Residues A17–T24, D89–H93, and N143–D146 each bind GTP.

This sequence belongs to the TRAFAC class translation factor GTPase superfamily. Classic translation factor GTPase family. EF-G/EF-2 subfamily.

Its subcellular location is the cytoplasm. Its function is as follows. Catalyzes the GTP-dependent ribosomal translocation step during translation elongation. During this step, the ribosome changes from the pre-translocational (PRE) to the post-translocational (POST) state as the newly formed A-site-bound peptidyl-tRNA and P-site-bound deacylated tRNA move to the P and E sites, respectively. Catalyzes the coordinated movement of the two tRNA molecules, the mRNA and conformational changes in the ribosome. The polypeptide is Elongation factor G (Pseudomonas fluorescens (strain SBW25)).